The primary structure comprises 546 residues: Delta-1-pyrroline-5-carboxylate dehydrogenase (546 aa).

Position 279–284 (279–284) interacts with NAD(+); it reads KDISSN. The Proton acceptor role is filled by Glu-297. Residue Cys-331 is the Nucleophile of the active site.

It belongs to the aldehyde dehydrogenase family.

Its subcellular location is the cytoplasm. The enzyme catalyses L-glutamate 5-semialdehyde + NAD(+) + H2O = L-glutamate + NADH + 2 H(+). Its pathway is amino-acid degradation; L-proline degradation into L-glutamate; L-glutamate from L-proline: step 2/2. The sequence is that of Delta-1-pyrroline-5-carboxylate dehydrogenase (pruA) from Agaricus bisporus (White button mushroom).